The sequence spans 110 residues: Phosphoribosyl-ATP pyrophosphatase (110 aa).

This sequence belongs to the PRA-PH family.

The protein resides in the cytoplasm. It carries out the reaction 1-(5-phospho-beta-D-ribosyl)-ATP + H2O = 1-(5-phospho-beta-D-ribosyl)-5'-AMP + diphosphate + H(+). The protein operates within amino-acid biosynthesis; L-histidine biosynthesis; L-histidine from 5-phospho-alpha-D-ribose 1-diphosphate: step 2/9. This Azotobacter chroococcum mcd 1 protein is Phosphoribosyl-ATP pyrophosphatase (hisE).